The following is a 277-amino-acid chain: Energy-coupling factor transporter ATP-binding protein EcfA1 (277 aa).

The region spanning 5–240 is the ABC transporter domain; the sequence is LEVENLVFKY…SEDMVEIGLD (236 aa). 40-47 serves as a coordination point for ATP; it reads GQNGSGKS.

Belongs to the ABC transporter superfamily. Energy-coupling factor EcfA family. As to quaternary structure, forms a stable energy-coupling factor (ECF) transporter complex composed of 2 membrane-embedded substrate-binding proteins (S component), 2 ATP-binding proteins (A component) and 2 transmembrane proteins (T component).

It localises to the cell membrane. ATP-binding (A) component of a common energy-coupling factor (ECF) ABC-transporter complex. Unlike classic ABC transporters this ECF transporter provides the energy necessary to transport a number of different substrates. This is Energy-coupling factor transporter ATP-binding protein EcfA1 from Lactococcus lactis subsp. lactis (strain IL1403) (Streptococcus lactis).